A 719-amino-acid chain; its full sequence is Polyribonucleotide nucleotidyltransferase (719 aa).

Mg(2+) contacts are provided by Asp-491 and Asp-497. Residues Pro-558–Ile-617 form the KH domain. The S1 motif domain maps to Gly-627 to Lys-695.

It belongs to the polyribonucleotide nucleotidyltransferase family. It depends on Mg(2+) as a cofactor.

Its subcellular location is the cytoplasm. It catalyses the reaction RNA(n+1) + phosphate = RNA(n) + a ribonucleoside 5'-diphosphate. Its function is as follows. Involved in mRNA degradation. Catalyzes the phosphorolysis of single-stranded polyribonucleotides processively in the 3'- to 5'-direction. The sequence is that of Polyribonucleotide nucleotidyltransferase from Bordetella bronchiseptica (strain ATCC BAA-588 / NCTC 13252 / RB50) (Alcaligenes bronchisepticus).